Consider the following 139-residue polypeptide: D-ribose pyranase (139 aa).

The Proton donor role is filled by His-20. Residues Asp-28, His-106, and 128 to 130 (YAN) each bind substrate.

This sequence belongs to the RbsD / FucU family. RbsD subfamily. Homodecamer.

It is found in the cytoplasm. The enzyme catalyses beta-D-ribopyranose = beta-D-ribofuranose. It participates in carbohydrate metabolism; D-ribose degradation; D-ribose 5-phosphate from beta-D-ribopyranose: step 1/2. Functionally, catalyzes the interconversion of beta-pyran and beta-furan forms of D-ribose. The polypeptide is D-ribose pyranase (Edwardsiella ictaluri (strain 93-146)).